The sequence spans 311 residues: Retinol dehydrogenase 8 (311 aa).

9–18 (LISGCSSGIG) provides a ligand contact to NADP(+). Transmembrane regions (helical) follow at residues 86 to 106 (VLVN…SLAA), 137 to 157 (IVVI…VYAA), and 169 to 189 (LAIQ…GPVV). Serine 142 is a substrate binding site. Catalysis depends on tyrosine 155, which acts as the Proton acceptor.

The protein belongs to the short-chain dehydrogenases/reductases (SDR) family. In terms of tissue distribution, detected in photoreceptor outer segments in the retina (at protein level).

It is found in the membrane. It catalyses the reaction all-trans-retinol + NADP(+) = all-trans-retinal + NADPH + H(+). Its function is as follows. Retinol dehydrogenase with a clear preference for NADP. Converts all-trans-retinal to all-trans-retinol. May play a role in the regeneration of visual pigment at high light intensity. This Homo sapiens (Human) protein is Retinol dehydrogenase 8 (RDH8).